The sequence spans 482 residues: ATP-dependent rRNA helicase rrp3 (482 aa).

Residues 1 to 55 (MSSVKRRKTEKNTSSGLKSKQAKEPKEASPLSSPEPTEENQNNEIEEGTEEEEVT) form a disordered region. Positions 44 to 53 (EIEEGTEEEE) are enriched in acidic residues. Residues 56–84 (KSFKDLGIVDSLCEACDTLGYKAPTPIQR) carry the Q motif motif. A Helicase ATP-binding domain is found at 87–258 (IPLALQGRDL…RASLKDPLRV (172 aa)). 100-107 (AETGSGKT) is an ATP binding site. A DEAD box motif is present at residues 206 to 209 (DEAD). The region spanning 282 to 430 (HKDTYLIYLL…EYQTVKDEVM (149 aa)) is the Helicase C-terminal domain. 2 stretches are compositionally biased toward basic and acidic residues: residues 444-456 (RNEMKNLHEDRGK) and 472-482 (RGRDEMDREEG). Positions 444–482 (RNEMKNLHEDRGKKGAVLKGRRPANGAKRGRDEMDREEG) are disordered.

It belongs to the DEAD box helicase family. DDX47/RRP3 subfamily. As to quaternary structure, interacts with the SSU processome.

Its subcellular location is the nucleus. It carries out the reaction ATP + H2O = ADP + phosphate + H(+). Functionally, ATP-dependent rRNA helicase required for pre-ribosomal RNA processing. Involved in the maturation of the 35S-pre-rRNA and to its cleavage to mature 18S rRNA. This Sclerotinia sclerotiorum (strain ATCC 18683 / 1980 / Ss-1) (White mold) protein is ATP-dependent rRNA helicase rrp3.